The following is a 1637-amino-acid chain: Surface protein (1637 aa).

A signal peptide spans 1–48 (MNKNSKKKLDFLPNKLNKYSIRRFTVGTASILVGATLIFGVANDQAEA). Disordered regions lie at residues 49–305 (AENN…RTQV), 689–719 (VQKGEDGEKTTTTPTKVDPDTGDVVERGEPT), and 739–1611 (PQGH…NGTL). Residues 56–65 (KQDDSSDASK) are compositionally biased toward basic and acidic residues. The span at 69–83 (NVQTIEQSSANSNES) shows a compositional bias: polar residues. Composition is skewed to basic and acidic residues over residues 90–106 (DVTKDTTEQASTEEKAN), 127–180 (EAPK…KATT), and 188–264 (ETSK…KVET). Over residues 289–298 (AKSNSNAQPS) the composition is skewed to polar residues. G5 domains are found at residues 654–737 (QADL…TPEE), 783–865 (HGPK…GGEE), 911–993 (HGPK…GGEE), 1039–1121 (HGPK…GGEE), and 1167–1250 (HGPK…APEI). Residues 779-817 (DVTKHGPKAGEPEVTKEEIPFEKKREFNPDLKPGEEKVT) are compositionally biased toward basic and acidic residues. Positions 818–832 (QEGQTGEKTTTTPTT) are enriched in low complexity. Over residues 907–945 (DVTKHGPKAGEPEVTKEEIPFEKKREFNPDLKPGEEKVT) the composition is skewed to basic and acidic residues. Positions 946 to 960 (QEGQTGEKTTTTPTT) are enriched in low complexity. Residues 1035–1073 (DVTKHGPKAGEPEVTKEEIPFEKKREFNPDLKPGEEKVT) are compositionally biased toward basic and acidic residues. Low complexity predominate over residues 1074–1088 (QEGQTGEKTTTTPTT). Over residues 1163-1189 (DVTKHGPKAGEPEVTKEEIPYETKRVL) the composition is skewed to basic and acidic residues. Acidic residues-rich tracts occupy residues 1282–1291 (TGEIIEEPQD) and 1302–1580 (SDAD…DSDS). A run of 141 repeats spans residues 1301 to 1302 (DS), 1303 to 1304 (DA), 1305 to 1306 (DS), 1307 to 1308 (DS), 1309 to 1310 (DA), 1311 to 1312 (DS), 1313 to 1314 (DS), 1315 to 1316 (DA), 1317 to 1318 (DS), 1319 to 1320 (DS), 1321 to 1322 (DA), 1323 to 1324 (DS), 1325 to 1326 (DS), 1327 to 1328 (DA), 1329 to 1330 (DS), 1331 to 1332 (DS), 1333 to 1334 (DS), 1335 to 1336 (DS), 1337 to 1338 (DS), 1339 to 1340 (DS), 1341 to 1342 (DS), 1343 to 1344 (DS), 1345 to 1346 (DA), 1347 to 1348 (DS), 1349 to 1350 (DS), 1351 to 1352 (DS), 1353 to 1354 (DS), 1355 to 1356 (DS), 1357 to 1358 (DA), 1359 to 1360 (DS), 1361 to 1362 (DS), 1363 to 1364 (DA), 1365 to 1366 (DS), 1367 to 1368 (DS), 1369 to 1370 (DA), 1371 to 1372 (DS), 1373 to 1374 (DS), 1375 to 1376 (DS), 1377 to 1378 (DA), 1379 to 1380 (DS), 1381 to 1382 (DS), 1383 to 1384 (DS), 1385 to 1386 (DA), 1387 to 1388 (DS), 1389 to 1390 (DS), 1391 to 1392 (DS), 1393 to 1394 (DS), 1395 to 1396 (DS), 1397 to 1398 (DA), 1399 to 1400 (DS), 1401 to 1402 (DS), 1403 to 1404 (DS), 1405 to 1406 (DS), 1407 to 1408 (DS), 1409 to 1410 (DA), 1411 to 1412 (DS), 1413 to 1414 (DS), 1415 to 1416 (DA), 1417 to 1418 (DS), 1419 to 1420 (DS), 1421 to 1422 (DS), 1423 to 1424 (DS), 1425 to 1426 (DS), 1427 to 1428 (DA), 1429 to 1430 (DS), 1431 to 1432 (DS), 1433 to 1434 (DS), 1435 to 1436 (DS), 1437 to 1438 (DS), 1439 to 1440 (DA), 1441 to 1442 (DS), 1443 to 1444 (DS), 1445 to 1446 (DA), 1447 to 1448 (DS), 1449 to 1450 (DS), 1451 to 1452 (DA), 1453 to 1454 (DS), 1455 to 1456 (DS), 1457 to 1458 (DA), 1459 to 1460 (DS), 1461 to 1462 (DS), 1463 to 1464 (DS), 1465 to 1466 (DS), 1467 to 1468 (DS), 1469 to 1470 (DA), 1471 to 1472 (DS), 1473 to 1474 (DS), 1475 to 1476 (DA), 1477 to 1478 (DS), 1479 to 1480 (DS), 1481 to 1482 (DA), 1483 to 1484 (DS), 1485 to 1486 (DS), 1487 to 1488 (DA), 1489 to 1490 (DS), 1491 to 1492 (DS), 1493 to 1494 (DS), 1495 to 1496 (DS), 1497 to 1498 (DS), 1499 to 1500 (DA), 1501 to 1502 (DS), 1503 to 1504 (DS), 1505 to 1506 (DS), 1507 to 1508 (DS), 1509 to 1510 (DS), 1511 to 1512 (DS), 1513 to 1514 (DA), 1515 to 1516 (DS), 1517 to 1518 (DS), 1519 to 1520 (DA), 1521 to 1522 (DS), 1523 to 1524 (DS), 1525 to 1526 (DS), 1527 to 1528 (DA), 1529 to 1530 (DS), 1531 to 1532 (DS), 1533 to 1534 (DA), 1535 to 1536 (DS), 1537 to 1538 (DS), 1539 to 1540 (DA), 1541 to 1542 (DG), 1543 to 1544 (DS), 1545 to 1546 (DA), 1547 to 1548 (DS), 1549 to 1550 (DS), 1551 to 1552 (DA), 1553 to 1554 (DS), 1555 to 1556 (DS), 1557 to 1558 (DS), 1559 to 1560 (DS), 1561 to 1562 (DS), 1563 to 1564 (DS), 1565 to 1566 (DS), 1567 to 1568 (DS), 1569 to 1570 (DA), 1571 to 1572 (DS), 1573 to 1574 (DS), 1575 to 1576 (DS), 1577 to 1578 (DS), 1579 to 1580 (DS), and 1581 to 1582 (DA). Residues 1301–1582 (DSDADSDSDA…DSDSDSDSDA (282 aa)) form a 141 X 2 AA tandem repeats of D-[SAG] region. Residues 1581 to 1599 (DADRDHNDKTDKPNNKELP) show a composition bias toward basic and acidic residues. The short motif at 1598 to 1602 (LPDTG) is the LPXTG sorting signal element. T1601 carries the post-translational modification Pentaglycyl murein peptidoglycan amidated threonine. The propeptide at 1602 to 1637 (GNDAQNNGTLFGSLFAALGGLFLVGRRRKNKNNEEK) is removed by sortase.

Its subcellular location is the secreted. The protein resides in the cell wall. Functionally, could have a role in preventing adhesion at some stages during an infection. The sequence is that of Surface protein (pls) from Staphylococcus aureus.